Here is a 113-residue protein sequence, read N- to C-terminus: MTDTHSIAQPFEAEVSPANNRHVTVGYASRYPDYSRIPAITLKGQWLEAAGFATGTAVDVKVMEGCIVLTAQPPAAEESELMQSLRQVCKLSARKQKQVQAFIGVIAGKQKVA.

The SpoVT-AbrB domain maps to 29–74 (SRYPDYSRIPAITLKGQWLEAAGFATGTAVDVKVMEGCIVLTAQPP).

This sequence belongs to the SymE family.

It is found in the cytoplasm. Its function is as follows. Involved in the degradation and recycling of damaged RNA. It is itself a target for degradation by the ATP-dependent protease Lon. The protein is Endoribonuclease SymE of Escherichia coli (strain K12 / MC4100 / BW2952).